A 113-amino-acid chain; its full sequence is Large ribosomal subunit protein uL22 (113 aa).

It belongs to the universal ribosomal protein uL22 family. As to quaternary structure, part of the 50S ribosomal subunit.

Its function is as follows. This protein binds specifically to 23S rRNA; its binding is stimulated by other ribosomal proteins, e.g. L4, L17, and L20. It is important during the early stages of 50S assembly. It makes multiple contacts with different domains of the 23S rRNA in the assembled 50S subunit and ribosome. The globular domain of the protein is located near the polypeptide exit tunnel on the outside of the subunit, while an extended beta-hairpin is found that lines the wall of the exit tunnel in the center of the 70S ribosome. In Syntrophomonas wolfei subsp. wolfei (strain DSM 2245B / Goettingen), this protein is Large ribosomal subunit protein uL22.